The sequence spans 159 residues: Eukaryotic translation initiation factor 5A-5 (159 aa).

Positions 1 to 12 (MSDEEHHFESKA) are enriched in basic and acidic residues. A disordered region spans residues 1–23 (MSDEEHHFESKADAGASKTYPQQ). Residue Lys52 is modified to Hypusine.

The protein belongs to the eIF-5A family. In terms of processing, lys-52 undergoes hypusination, a unique post-translational modification that consists in the addition of a butylamino group from spermidine to lysine side chain, leading to the formation of the unusual amino acid hypusine. eIF-5As are the only known proteins to undergo this modification, which is essential for their function.

In terms of biological role, translation factor that promotes translation elongation and termination, particularly upon ribosome stalling at specific amino acid sequence contexts. Binds between the exit (E) and peptidyl (P) site of the ribosome and promotes rescue of stalled ribosome: specifically required for efficient translation of polyproline-containing peptides as well as other motifs that stall the ribosome. Acts as a ribosome quality control (RQC) cofactor by joining the RQC complex to facilitate peptidyl transfer during CAT tailing step. The chain is Eukaryotic translation initiation factor 5A-5 (EIF5A5) from Solanum tuberosum (Potato).